A 278-amino-acid polypeptide reads, in one-letter code: Large ribosomal subunit protein uL2 (278 aa).

Basic residues-rich tracts occupy residues 210–219 (RSRWLGKRPQ) and 252–263 (KKSRGIKTRNSK). The interval 210–278 (RSRWLGKRPQ…LIIRHRKGNK (69 aa)) is disordered.

It belongs to the universal ribosomal protein uL2 family. In terms of assembly, part of the 50S ribosomal subunit. Forms a bridge to the 30S subunit in the 70S ribosome.

Functionally, one of the primary rRNA binding proteins. Required for association of the 30S and 50S subunits to form the 70S ribosome, for tRNA binding and peptide bond formation. It has been suggested to have peptidyltransferase activity; this is somewhat controversial. Makes several contacts with the 16S rRNA in the 70S ribosome. This is Large ribosomal subunit protein uL2 from Lactobacillus johnsonii (strain CNCM I-12250 / La1 / NCC 533).